The sequence spans 241 residues: Proteasome subunit alpha (241 aa).

It belongs to the peptidase T1A family. The 20S proteasome core is composed of 14 alpha and 14 beta subunits that assemble into four stacked heptameric rings, resulting in a barrel-shaped structure. The two inner rings, each composed of seven catalytic beta subunits, are sandwiched by two outer rings, each composed of seven alpha subunits. The catalytic chamber with the active sites is on the inside of the barrel. Has a gated structure, the ends of the cylinder being occluded by the N-termini of the alpha-subunits. Is capped by the proteasome-associated ATPase, ARC.

It is found in the cytoplasm. Its pathway is protein degradation; proteasomal Pup-dependent pathway. Its activity is regulated as follows. The formation of the proteasomal ATPase ARC-20S proteasome complex, likely via the docking of the C-termini of ARC into the intersubunit pockets in the alpha-rings, may trigger opening of the gate for substrate entry. Interconversion between the open-gate and close-gate conformations leads to a dynamic regulation of the 20S proteasome proteolysis activity. Functionally, component of the proteasome core, a large protease complex with broad specificity involved in protein degradation. The sequence is that of Proteasome subunit alpha from Parafrankia sp. (strain EAN1pec).